Here is a 372-residue protein sequence, read N- to C-terminus: Anhydro-N-acetylmuramic acid kinase (372 aa).

Position 14–21 (14–21 (GTSLDGVD)) interacts with ATP.

It belongs to the anhydro-N-acetylmuramic acid kinase family.

It catalyses the reaction 1,6-anhydro-N-acetyl-beta-muramate + ATP + H2O = N-acetyl-D-muramate 6-phosphate + ADP + H(+). The protein operates within amino-sugar metabolism; 1,6-anhydro-N-acetylmuramate degradation. Its pathway is cell wall biogenesis; peptidoglycan recycling. Its function is as follows. Catalyzes the specific phosphorylation of 1,6-anhydro-N-acetylmuramic acid (anhMurNAc) with the simultaneous cleavage of the 1,6-anhydro ring, generating MurNAc-6-P. Is required for the utilization of anhMurNAc either imported from the medium or derived from its own cell wall murein, and thus plays a role in cell wall recycling. This Photorhabdus laumondii subsp. laumondii (strain DSM 15139 / CIP 105565 / TT01) (Photorhabdus luminescens subsp. laumondii) protein is Anhydro-N-acetylmuramic acid kinase.